Reading from the N-terminus, the 324-residue chain is Tyrosine--tRNA ligase (324 aa).

Tyr-36 is a binding site for L-tyrosine. The 'HIGH' region signature appears at Pro-41–His-49. L-tyrosine contacts are provided by Tyr-158, Gln-162, Asp-165, and Gln-180. Residues Lys-215–Ser-219 carry the 'KMSKS' region motif. Position 218 (Ser-218) interacts with ATP.

The protein belongs to the class-I aminoacyl-tRNA synthetase family. TyrS type 3 subfamily. Homodimer.

It localises to the cytoplasm. It catalyses the reaction tRNA(Tyr) + L-tyrosine + ATP = L-tyrosyl-tRNA(Tyr) + AMP + diphosphate + H(+). Catalyzes the attachment of tyrosine to tRNA(Tyr) in a two-step reaction: tyrosine is first activated by ATP to form Tyr-AMP and then transferred to the acceptor end of tRNA(Tyr). This chain is Tyrosine--tRNA ligase, found in Methanopyrus kandleri (strain AV19 / DSM 6324 / JCM 9639 / NBRC 100938).